A 505-amino-acid chain; its full sequence is Dolichyl pyrophosphate Glc1Man9GlcNAc2 alpha-1,3-glucosyltransferase (505 aa).

The Lumenal portion of the chain corresponds to 1 to 3; the sequence is MAE. The chain crosses the membrane as a helical span at residues 4 to 24; it reads IYPSLVQCAIVATAFKVLLFP. Over 25–101 the chain is Cytoplasmic; that stretch reads AYKSTDFEVH…DSWQTVYFQR (77 aa). Residues 102-122 traverse the membrane as a helical segment; that stretch reads WTVIVTELVLLYALQMFVDST. Residues 123 to 128 are Lumenal-facing; the sequence is PGVSKR. The helical transmembrane segment at 129–149 threads the bilayer; the sequence is AAHAAAVSILLSPGLLIIDHI. Over 150 to 152 the chain is Cytoplasmic; it reads HFQ. A helical transmembrane segment spans residues 153–169; that stretch reads YNGVMYGILIASLVLAK. The Lumenal portion of the chain corresponds to 170–173; that stretch reads KKSS. Residues 174–194 traverse the membrane as a helical segment; the sequence is LLASGLVFAALLCMKHIYLYL. The Cytoplasmic segment spans residues 195–224; that stretch reads APAYFVYLLRVYCLPPKLSPRSIFRIQFFN. Residues 225–245 traverse the membrane as a helical segment; the sequence is CVKLGGGIAAIFAAAFGPFAL. Topologically, residues 246 to 319 are lumenal; that stretch reads KNQIPQIFSR…TSFAVLPDIT (74 aa). Residues 320-340 form a helical membrane-spanning segment; it reads PRMCFVLTLLFQAIPLIKLFM. Over 341–359 the chain is Cytoplasmic; that stretch reads RPTWEGFIGGVTLCGYASF. The helical transmembrane segment at 360–380 threads the bilayer; it reads LFGWHVHEKAILLVIIPFSLI. The Lumenal portion of the chain corresponds to 381–386; that stretch reads ALKDRR. The helical transmembrane segment at 387–407 threads the bilayer; the sequence is YLGAFRPLAVAGHVSLFPLIF. Residues 408-409 are Cytoplasmic-facing; it reads TP. The chain crosses the membrane as a helical span at residues 410–430; that stretch reads AEFPIKTVYTIFWLVLFLMAF. Topologically, residues 431–450 are lumenal; the sequence is DRLAPAPTRQRLFLFDRFST. Residues 451 to 471 form a helical membrane-spanning segment; the sequence is AYITVSIPLIFYCSLMHGIIF. The Cytoplasmic portion of the chain corresponds to 472–480; that stretch reads GKSYEFLPL. The chain crosses the membrane as a helical span at residues 481–501; the sequence is MFTSSYSAIGVVGSWLGFMVV. Residues 502–505 are Lumenal-facing; sequence YFTE.

The protein belongs to the ALG6/ALG8 glucosyltransferase family.

It is found in the endoplasmic reticulum membrane. It catalyses the reaction an alpha-D-Glc-(1-&gt;3)-alpha-D-Man-(1-&gt;2)-alpha-D-Man-(1-&gt;2)-alpha-D-Man-(1-&gt;3)-[alpha-D-Man-(1-&gt;2)-alpha-D-Man-(1-&gt;3)-[alpha-D-Man-(1-&gt;2)-alpha-D-Man-(1-&gt;6)]-alpha-D-Man-(1-&gt;6)]-beta-D-Man-(1-&gt;4)-beta-D-GlcNAc-(1-&gt;4)-alpha-D-GlcNAc-diphospho-di-trans,poly-cis-dolichol + a di-trans,poly-cis-dolichyl beta-D-glucosyl phosphate = an alpha-D-Glc-(1-&gt;3)-alpha-D-Glc-(1-&gt;3)-alpha-D-Man-(1-&gt;2)-alpha-D-Man-(1-&gt;2)-alpha-D-Man-(1-&gt;3)-[alpha-D-Man-(1-&gt;2)-alpha-D-Man-(1-&gt;3)-[alpha-D-Man-(1-&gt;2)-alpha-D-Man-(1-&gt;6)]-alpha-D-Man-(1-&gt;6)]-beta-D-Man-(1-&gt;4)-beta-D-GlcNAc-(1-&gt;4)-alpha-D-GlcNAc-diphospho-di-trans,poly-cis-dolichol + a di-trans,poly-cis-dolichyl phosphate + H(+). It functions in the pathway protein modification; protein glycosylation. In terms of biological role, dolichyl pyrophosphate Glc1Man9GlcNAc2 alpha-1,3-glucosyltransferase that operates in the biosynthetic pathway of dolichol-linked oligosaccharides, the glycan precursors employed in protein asparagine (N)-glycosylation. The assembly of dolichol-linked oligosaccharides begins on the cytosolic side of the endoplasmic reticulum membrane and finishes in its lumen. The sequential addition of sugars to dolichol pyrophosphate produces dolichol-linked oligosaccharides containing fourteen sugars, including two GlcNAcs, nine mannoses and three glucoses. Once assembled, the oligosaccharide is transferred from the lipid to nascent proteins by oligosaccharyltransferases. In the lumen of the endoplasmic reticulum, adds the second glucose residue from dolichyl phosphate glucose (Dol-P-Glc) onto the lipid-linked oligosaccharide intermediate Glc(1)Man(9)GlcNAc(2)-PP-Dol to produce Glc(2)Man(9)GlcNAc(2)-PP-Dol. The protein is Dolichyl pyrophosphate Glc1Man9GlcNAc2 alpha-1,3-glucosyltransferase (alg-8) of Neurospora crassa (strain ATCC 24698 / 74-OR23-1A / CBS 708.71 / DSM 1257 / FGSC 987).